The primary structure comprises 341 residues: Glyceraldehyde-3-phosphate dehydrogenase 2 (341 aa).

NAD(+)-binding positions include 13–14 (RI), Asp35, and Arg85. D-glyceraldehyde 3-phosphate-binding positions include 157-159 (SCT), Thr188, 217-218 (TG), and Arg240. The active-site Nucleophile is Cys158. NAD(+) is bound at residue Asn322.

The protein belongs to the glyceraldehyde-3-phosphate dehydrogenase family. Homotetramer.

It localises to the cytoplasm. The catalysed reaction is D-glyceraldehyde 3-phosphate + phosphate + NAD(+) = (2R)-3-phospho-glyceroyl phosphate + NADH + H(+). It functions in the pathway carbohydrate degradation; glycolysis; pyruvate from D-glyceraldehyde 3-phosphate: step 1/5. In Caenorhabditis elegans, this protein is Glyceraldehyde-3-phosphate dehydrogenase 2 (gpd-2).